A 381-amino-acid polypeptide reads, in one-letter code: uncharacterized protein (381 aa).

A signal peptide spans 1–16 (MQTLLFYFFFINLIFA). At 17-303 (HDLNVKTYKP…KILENSPCPN (287 aa)) the chain is on the lumenal side. Cys-118 and Cys-149 are oxidised to a cystine. N-linked (GlcNAc...) asparagine glycosylation is found at Asn-133, Asn-192, Asn-225, Asn-243, Asn-246, and Asn-287. The helical transmembrane segment at 304–324 (QPSIQPFGILMMLVSTIYGNF) threads the bilayer. The Cytoplasmic portion of the chain corresponds to 325 to 359 (KNLYNCIKRNTIGYIYNSIYDFWITEGMLFPMRNM). The helical transmembrane segment at 360–380 (DIFKITAISIGLSIPVFLWLL) threads the bilayer. A topological domain (lumenal) is located at residue Lys-381.

It belongs to the calreticulin family.

The protein resides in the endoplasmic reticulum membrane. This is an uncharacterized protein from Schizosaccharomyces pombe (strain 972 / ATCC 24843) (Fission yeast).